A 476-amino-acid chain; its full sequence is ATP synthase subunit beta (476 aa).

152–159 (GGAGVGKT) serves as a coordination point for ATP.

It belongs to the ATPase alpha/beta chains family. As to quaternary structure, F-type ATPases have 2 components, CF(1) - the catalytic core - and CF(0) - the membrane proton channel. CF(1) has five subunits: alpha(3), beta(3), gamma(1), delta(1), epsilon(1). CF(0) has three main subunits: a(1), b(2) and c(9-12). The alpha and beta chains form an alternating ring which encloses part of the gamma chain. CF(1) is attached to CF(0) by a central stalk formed by the gamma and epsilon chains, while a peripheral stalk is formed by the delta and b chains.

It is found in the cell inner membrane. It carries out the reaction ATP + H2O + 4 H(+)(in) = ADP + phosphate + 5 H(+)(out). Functionally, produces ATP from ADP in the presence of a proton gradient across the membrane. The catalytic sites are hosted primarily by the beta subunits. The protein is ATP synthase subunit beta of Acidiphilium cryptum (strain JF-5).